We begin with the raw amino-acid sequence, 103 residues long: Large ribosomal subunit protein bL21 (103 aa).

This sequence belongs to the bacterial ribosomal protein bL21 family. In terms of assembly, part of the 50S ribosomal subunit. Contacts protein L20.

This protein binds to 23S rRNA in the presence of protein L20. This chain is Large ribosomal subunit protein bL21, found in Aeromonas salmonicida (strain A449).